The sequence spans 333 residues: Eukaryotic translation initiation factor 3 subunit H-B (333 aa).

The 135-residue stretch at 20 to 154 (IQIEGLVVMK…LKAYRLTPKL (135 aa)) folds into the MPN domain. Positions 249–295 (SKQQQQKHQYVQRRQQENAQRQSRGEPPLPEEDLTKMFKPPQPPPRM) are disordered. The span at 250–261 (KQQQQKHQYVQR) shows a compositional bias: low complexity.

The protein belongs to the eIF-3 subunit H family. In terms of assembly, component of the eukaryotic translation initiation factor 3 (eIF-3) complex, which is composed of 13 subunits: eif3a, eif3b, eif3c, eif3d, eif3e, eif3f, eif3g, eif3h, eif3i, eif3j, eif3k, eif3l and eif3m.

The protein resides in the cytoplasm. Functionally, component of the eukaryotic translation initiation factor 3 (eIF-3) complex, which is involved in protein synthesis of a specialized repertoire of mRNAs and, together with other initiation factors, stimulates binding of mRNA and methionyl-tRNAi to the 40S ribosome. The eIF-3 complex specifically targets and initiates translation of a subset of mRNAs involved in cell proliferation. This Danio rerio (Zebrafish) protein is Eukaryotic translation initiation factor 3 subunit H-B (eif3hb).